Here is a 170-residue protein sequence, read N- to C-terminus: Adenine phosphoribosyltransferase (170 aa).

The protein belongs to the purine/pyrimidine phosphoribosyltransferase family. Homodimer.

It is found in the cytoplasm. It catalyses the reaction AMP + diphosphate = 5-phospho-alpha-D-ribose 1-diphosphate + adenine. The protein operates within purine metabolism; AMP biosynthesis via salvage pathway; AMP from adenine: step 1/1. Catalyzes a salvage reaction resulting in the formation of AMP, that is energically less costly than de novo synthesis. This is Adenine phosphoribosyltransferase from Trichodesmium erythraeum (strain IMS101).